The chain runs to 343 residues: Fructose-1,6-bisphosphatase class 1 (343 aa).

Positions 90, 109, 111, and 112 each coordinate Mg(2+). Substrate is bound by residues 112-115 (DGSS) and asparagine 199. Glutamate 271 is a Mg(2+) binding site.

This sequence belongs to the FBPase class 1 family. In terms of assembly, homotetramer. Requires Mg(2+) as cofactor.

Its subcellular location is the cytoplasm. The catalysed reaction is beta-D-fructose 1,6-bisphosphate + H2O = beta-D-fructose 6-phosphate + phosphate. It participates in carbohydrate biosynthesis; Calvin cycle. This is Fructose-1,6-bisphosphatase class 1 from Rhodopseudomonas palustris (strain ATCC BAA-98 / CGA009).